A 247-amino-acid chain; its full sequence is Aliphatic sulfonates import ATP-binding protein SsuB 3 (247 aa).

The region spanning 13-227 (VRVRGAGRAF…SVVDPEFSAL (215 aa)) is the ABC transporter domain. Residue 45–52 (GASGSGKS) coordinates ATP.

The protein belongs to the ABC transporter superfamily. Aliphatic sulfonates importer (TC 3.A.1.17.2) family. The complex is composed of two ATP-binding proteins (SsuB), two transmembrane proteins (SsuC) and a solute-binding protein (SsuA).

It is found in the cell membrane. It carries out the reaction ATP + H2O + aliphatic sulfonate-[sulfonate-binding protein]Side 1 = ADP + phosphate + aliphatic sulfonateSide 2 + [sulfonate-binding protein]Side 1.. Its function is as follows. Part of the ABC transporter complex SsuABC involved in aliphatic sulfonates import. Responsible for energy coupling to the transport system. This is Aliphatic sulfonates import ATP-binding protein SsuB 3 from Nocardia farcinica (strain IFM 10152).